A 580-amino-acid chain; its full sequence is Zinc finger protein 271 (580 aa).

18 consecutive C2H2-type zinc fingers follow at residues 78–100 (YNCD…QRTH), 104–126 (YECE…QRIH), 132–154 (YPCS…QRVH), 160–182 (YKCD…QRIH), 188–210 (YQCS…LRIH), 216–238 (YMCN…QRIH), 244–266 (YKCD…QRIH), 272–294 (YPCA…RRIH), 300–322 (YKCS…QRIH), 328–350 (YPCN…QRIH), 356–378 (YPCS…YRIH), 384–406 (YECD…QRIH), 412–434 (YPCN…QRVH), 440–462 (YTCN…QRVH), 468–490 (YHCS…HRVH), 496–518 (YACT…QRIH), 524–545 (YKCM…QRIH), and 551–573 (YPCA…QRVH).

It belongs to the krueppel C2H2-type zinc-finger protein family. In terms of tissue distribution, selectively expressed in adult testis.

The protein localises to the nucleus. In terms of biological role, may act to control gene activity during the pachytene stage of meiotic prophase. May function as a transcription activator. The chain is Zinc finger protein 271 (Znf271) from Mus musculus (Mouse).